The chain runs to 431 residues: SPI-1 type 3 secretion system ATPase (431 aa).

162–167 provides a ligand contact to ATP; it reads GCGKTM.

Belongs to the ATPase alpha/beta chains family. T3SS ATPase subfamily. As to quaternary structure, the core secretion machinery of the T3SS is composed of approximately 20 different proteins, including cytoplasmic components, a base, an export apparatus and a needle. This subunit is part of the cytosolic complex. Forms homohexamers.

The protein localises to the cytoplasm. The catalysed reaction is ATP + H2O + cellular proteinSide 1 = ADP + phosphate + cellular proteinSide 2.. Functionally, ATPase component of the type III secretion system (T3SS), also called injectisome, which is used to inject bacterial effector proteins into eukaryotic host cells. Acts as a molecular motor to provide the energy that is required for the export of proteins. Required for type III secretion apparatus (T3SA) formation, proper protein secretion, host cell invasion and virulence. May play a critical role in T3SS substrate recognition, disassembly of the effector/chaperone complex and unfolding of the effector in an ATP-dependent manner prior to secretion. This Salmonella typhi protein is SPI-1 type 3 secretion system ATPase.